Here is a 300-residue protein sequence, read N- to C-terminus: 4-hydroxy-tetrahydrodipicolinate synthase (300 aa).

Position 46 (T46) interacts with pyruvate. Y134 (proton donor/acceptor) is an active-site residue. Catalysis depends on K162, which acts as the Schiff-base intermediate with substrate. V204 contacts pyruvate.

The protein belongs to the DapA family. Homotetramer; dimer of dimers.

The protein resides in the cytoplasm. It catalyses the reaction L-aspartate 4-semialdehyde + pyruvate = (2S,4S)-4-hydroxy-2,3,4,5-tetrahydrodipicolinate + H2O + H(+). The protein operates within amino-acid biosynthesis; L-lysine biosynthesis via DAP pathway; (S)-tetrahydrodipicolinate from L-aspartate: step 3/4. Its function is as follows. Catalyzes the condensation of (S)-aspartate-beta-semialdehyde [(S)-ASA] and pyruvate to 4-hydroxy-tetrahydrodipicolinate (HTPA). This Heliobacterium modesticaldum (strain ATCC 51547 / Ice1) protein is 4-hydroxy-tetrahydrodipicolinate synthase.